Consider the following 611-residue polypeptide: Elongation factor 4 (611 aa).

The tr-type G domain maps to 12–193 (AVIRNFCIIA…TIVAKVPAPE (182 aa)). GTP is bound by residues 24 to 29 (DHGKST) and 140 to 143 (NKID).

This sequence belongs to the TRAFAC class translation factor GTPase superfamily. Classic translation factor GTPase family. LepA subfamily.

Its subcellular location is the cell membrane. The enzyme catalyses GTP + H2O = GDP + phosphate + H(+). Its function is as follows. Required for accurate and efficient protein synthesis under certain stress conditions. May act as a fidelity factor of the translation reaction, by catalyzing a one-codon backward translocation of tRNAs on improperly translocated ribosomes. Back-translocation proceeds from a post-translocation (POST) complex to a pre-translocation (PRE) complex, thus giving elongation factor G a second chance to translocate the tRNAs correctly. Binds to ribosomes in a GTP-dependent manner. The chain is Elongation factor 4 from Cutibacterium acnes (strain DSM 16379 / KPA171202) (Propionibacterium acnes).